A 476-amino-acid chain; its full sequence is Glycogen synthase (476 aa).

Lys15 is a binding site for ADP-alpha-D-glucose.

It belongs to the glycosyltransferase 1 family. Bacterial/plant glycogen synthase subfamily.

The catalysed reaction is [(1-&gt;4)-alpha-D-glucosyl](n) + ADP-alpha-D-glucose = [(1-&gt;4)-alpha-D-glucosyl](n+1) + ADP + H(+). The protein operates within glycan biosynthesis; glycogen biosynthesis. In terms of biological role, synthesizes alpha-1,4-glucan chains using ADP-glucose. The sequence is that of Glycogen synthase from Lactobacillus acidophilus (strain ATCC 700396 / NCK56 / N2 / NCFM).